The following is a 253-amino-acid chain: DnaJ homolog subfamily C member 8 (253 aa).

Ala-2 is subject to N-acetylalanine. At Ser-35 the chain carries Phosphoserine. Residues 57–124 (NPFEVLQIDP…QKKRALDVIQ (68 aa)) form the J domain. Lys-146 carries the N6-acetyllysine modification. Residues 181-222 (EAKEMHERKRQREEEIEAQEKAKREREWQKNFEESRDGRVDS) are compositionally biased toward basic and acidic residues. The tract at residues 181-253 (EAKEMHERKR…PPKVKMEQRE (73 aa)) is disordered. 2 consecutive short sequence motifs (nuclear localization signal) follow at residues 189-192 (KRQR) and 203-206 (KRER). A Phosphoserine modification is found at Ser-222. Basic residues predominate over residues 231 to 240 (KGKKEKKNRT). The essential for polyglutamine aggregation suppression stretch occupies residues 232–253 (GKKEKKNRTFLRPPKVKMEQRE).

As to quaternary structure, interacts with SRPK1. Interacts with HSP70 (HSPA1A or HSPA1B).

It localises to the nucleus. Functionally, suppresses polyglutamine (polyQ) aggregation of ATXN3 in neuronal cells. This is DnaJ homolog subfamily C member 8 (Dnajc8) from Mus musculus (Mouse).